Reading from the N-terminus, the 435-residue chain is Adenylosuccinate synthetase (435 aa).

GTP is bound by residues 17–23 (GDEGKGK) and 45–47 (GHT). The Proton acceptor role is filled by aspartate 18. Mg(2+) contacts are provided by aspartate 18 and glycine 45. Residues 18 to 21 (DEGK), 43 to 46 (NAGH), threonine 134, arginine 148, glutamine 229, threonine 244, and arginine 308 contribute to the IMP site. The active-site Proton donor is histidine 46. Substrate is bound at residue 304–310 (SVTGRPR). GTP is bound by residues arginine 310, 336–338 (KLD), and 418–420 (STG).

It belongs to the adenylosuccinate synthetase family. In terms of assembly, homodimer. Mg(2+) serves as cofactor.

It localises to the cytoplasm. The catalysed reaction is IMP + L-aspartate + GTP = N(6)-(1,2-dicarboxyethyl)-AMP + GDP + phosphate + 2 H(+). The protein operates within purine metabolism; AMP biosynthesis via de novo pathway; AMP from IMP: step 1/2. In terms of biological role, plays an important role in the de novo pathway of purine nucleotide biosynthesis. Catalyzes the first committed step in the biosynthesis of AMP from IMP. The chain is Adenylosuccinate synthetase from Bordetella parapertussis (strain 12822 / ATCC BAA-587 / NCTC 13253).